The sequence spans 489 residues: Betaine aldehyde dehydrogenase (489 aa).

Residues Thr-26 and Asp-93 each contribute to the K(+) site. 150–152 lines the NAD(+) pocket; that stretch reads GAW. Lys-162 (charge relay system) is an active-site residue. NAD(+) is bound at residue 176-179; it reads KPSE. Ile-180 provides a ligand contact to K(+). 229–232 provides a ligand contact to NAD(+); sequence GVET. A K(+)-binding site is contributed by Leu-245. Glu-251 functions as the Proton acceptor in the catalytic mechanism. NAD(+) contacts are provided by Gly-253, Cys-285, and Glu-386. Cys-285 serves as the catalytic Nucleophile. At Cys-285 the chain carries Cysteine sulfenic acid (-SOH). K(+) is bound by residues Lys-456 and Gly-459. Glu-463 serves as the catalytic Charge relay system.

Belongs to the aldehyde dehydrogenase family. Dimer of dimers. Requires K(+) as cofactor.

It carries out the reaction betaine aldehyde + NAD(+) + H2O = glycine betaine + NADH + 2 H(+). It participates in amine and polyamine biosynthesis; betaine biosynthesis via choline pathway; betaine from betaine aldehyde: step 1/1. Involved in the biosynthesis of the osmoprotectant glycine betaine. Catalyzes the irreversible oxidation of betaine aldehyde to the corresponding acid. The polypeptide is Betaine aldehyde dehydrogenase (Paraburkholderia xenovorans (strain LB400)).